The primary structure comprises 598 residues: Elongation factor 4 (598 aa).

In terms of domain architecture, tr-type G spans 3-185; sequence QHIRNFSIIA…MIVAQIPPPE (183 aa). GTP-binding positions include 15-20 and 132-135; these read DHGKST and NKID.

Belongs to the TRAFAC class translation factor GTPase superfamily. Classic translation factor GTPase family. LepA subfamily.

The protein resides in the cell inner membrane. The enzyme catalyses GTP + H2O = GDP + phosphate + H(+). Functionally, required for accurate and efficient protein synthesis under certain stress conditions. May act as a fidelity factor of the translation reaction, by catalyzing a one-codon backward translocation of tRNAs on improperly translocated ribosomes. Back-translocation proceeds from a post-translocation (POST) complex to a pre-translocation (PRE) complex, thus giving elongation factor G a second chance to translocate the tRNAs correctly. Binds to ribosomes in a GTP-dependent manner. This is Elongation factor 4 from Nitrosomonas europaea (strain ATCC 19718 / CIP 103999 / KCTC 2705 / NBRC 14298).